A 361-amino-acid polypeptide reads, in one-letter code: S-adenosylmethionine:tRNA ribosyltransferase-isomerase (361 aa).

The protein belongs to the QueA family. In terms of assembly, monomer.

Its subcellular location is the cytoplasm. The catalysed reaction is 7-aminomethyl-7-carbaguanosine(34) in tRNA + S-adenosyl-L-methionine = epoxyqueuosine(34) in tRNA + adenine + L-methionine + 2 H(+). It functions in the pathway tRNA modification; tRNA-queuosine biosynthesis. Transfers and isomerizes the ribose moiety from AdoMet to the 7-aminomethyl group of 7-deazaguanine (preQ1-tRNA) to give epoxyqueuosine (oQ-tRNA). The sequence is that of S-adenosylmethionine:tRNA ribosyltransferase-isomerase from Methylocella silvestris (strain DSM 15510 / CIP 108128 / LMG 27833 / NCIMB 13906 / BL2).